Consider the following 117-residue polypeptide: Replication initiation control protein YabA (117 aa).

Residues Asn45–Asp81 form a disordered region. Composition is skewed to basic and acidic residues over residues Gln46–Glu62 and Gly72–Asp81. Zn(2+)-binding residues include His92, Cys94, Cys107, and Cys110.

Belongs to the YabA family. Homotetramer. Interacts with both DnaA and DnaN, acting as a bridge between these two proteins. It depends on Zn(2+) as a cofactor.

The protein localises to the cytoplasm. The protein resides in the nucleoid. Functionally, involved in control of chromosome replication initiation. Inhibits the cooperative binding of DnaA to the oriC region, thus negatively regulating initiation of chromosome replication. Inhibits the ability of DnaA-ATP to form a helix on DNA; does not disassemble preformed DnaA-DNA helices. Decreases the residence time of DnaA on the chromosome at its binding sites (oriC, replication forks and promoter-binding sites). Tethers DnaA to the replication machinery via the DNA polymerase beta sliding clamp subunit (dnaN). Associates with oriC and other DnaA targets on the chromosome in a DnaA-dependent manner. This is Replication initiation control protein YabA from Bacillus pumilus (strain SAFR-032).